The following is a 670-amino-acid chain: NAD-dependent histone deacetylase SIR2 (670 aa).

2 disordered regions span residues 1-157 (MTEY…EHPI) and 235-263 (DNDD…PSPS). Positions 45-68 (NEDVDVDADADVDADADADADAEE) are enriched in acidic residues. Residues 69-81 (DAQKDILEETKAD) show a composition bias toward basic and acidic residues. The segment covering 82-92 (ELDEVVDEYEE) has biased composition (acidic residues). The segment covering 96-119 (SSNFNGTASDHVGITSSNTGSTAL) has biased composition (polar residues). Over residues 120-142 (AASSADTNSGSGNGTGTMATNGT) the composition is skewed to low complexity. The span at 239–261 (SLPQKNSSETKNVSDTYTATYPS) shows a compositional bias: polar residues. Positions 293-583 (RLTNFHTIDD…ALVAQKCGWD (291 aa)) constitute a Deacetylase sirtuin-type domain. NAD(+)-binding positions include 318 to 337 (GAGI…EGFY) and 400 to 403 (QNID). The active-site Proton acceptor is H420. 4 residues coordinate Zn(2+): C428, C431, C452, and C455. NAD(+) is bound by residues 527–529 (GTS), 552–554 (NKD), and C569. The segment at 617 to 670 (AELEAEEEKHLPLQQSTAALTPPVSLSADSPGRSSSSSPQPPTQTDIANNQTST) is disordered. The segment covering 641–654 (SLSADSPGRSSSSS) has biased composition (low complexity). The span at 659–670 (TQTDIANNQTST) shows a compositional bias: polar residues.

It belongs to the sirtuin family. Class I subfamily. The cofactor is Zn(2+).

Its subcellular location is the nucleus. It carries out the reaction N(6)-acetyl-L-lysyl-[protein] + NAD(+) + H2O = 2''-O-acetyl-ADP-D-ribose + nicotinamide + L-lysyl-[protein]. In terms of biological role, NAD-dependent deacetylase, which asts as a key regulator of gene expression believed to help form modified chromatin structures on the genes it regulates. It is involved in telomeric silencing and in hm mating type loci silencing. This Kluyveromyces lactis (strain ATCC 8585 / CBS 2359 / DSM 70799 / NBRC 1267 / NRRL Y-1140 / WM37) (Yeast) protein is NAD-dependent histone deacetylase SIR2 (SIR2).